The sequence spans 245 residues: ATP synthase subunit a (245 aa).

The next 7 membrane-spanning stretches (helical) occupy residues 5-25, 37-57, 99-119, 125-145, 157-177, 187-209, and 221-241; these read LWFTAFLNQYLAGPVSAMMSV, ISNYVAMEILVFLLLVLFFIA, YIVTLGVFILSMNLIGLIPGF, FPSVPLGCALVTWFFYHVHGL, FLGPVWWISPLLFVIEICSHF, LYANMFAGDMVTLAFFSLVPLGF, and SLIQTYIFITLAAVYLAEATA.

Belongs to the ATPase A chain family. F-type ATPases have 2 components, CF(1) - the catalytic core - and CF(0) - the membrane proton channel. CF(1) has five subunits: alpha(3), beta(3), gamma(1), delta(1), epsilon(1). CF(0) has three main subunits: a(1), b(2) and c(9-12). The alpha and beta chains form an alternating ring which encloses part of the gamma chain. CF(1) is attached to CF(0) by a central stalk formed by the gamma and epsilon chains, while a peripheral stalk is formed by the delta and b chains.

It localises to the cell inner membrane. In terms of biological role, key component of the proton channel; it plays a direct role in the translocation of protons across the membrane. In Koribacter versatilis (strain Ellin345), this protein is ATP synthase subunit a.